The sequence spans 1201 residues: DNA-directed RNA polymerase subunit beta' (1201 aa).

Zn(2+) is bound by residues C60, C62, C75, and C78. Mg(2+) contacts are provided by D449, D451, and D453. Positions 818, 892, 899, and 902 each coordinate Zn(2+).

Belongs to the RNA polymerase beta' chain family. In terms of assembly, the RNAP catalytic core consists of 2 alpha, 1 beta, 1 beta' and 1 omega subunit. When a sigma factor is associated with the core the holoenzyme is formed, which can initiate transcription. Requires Mg(2+) as cofactor. Zn(2+) serves as cofactor.

The catalysed reaction is RNA(n) + a ribonucleoside 5'-triphosphate = RNA(n+1) + diphosphate. DNA-dependent RNA polymerase catalyzes the transcription of DNA into RNA using the four ribonucleoside triphosphates as substrates. In Listeria welshimeri serovar 6b (strain ATCC 35897 / DSM 20650 / CCUG 15529 / CIP 8149 / NCTC 11857 / SLCC 5334 / V8), this protein is DNA-directed RNA polymerase subunit beta'.